Consider the following 34-residue polypeptide: Non-cysteinic peptide Bs 10 (34 aa).

The segment at 1-34 (VTMGYIKDGDGKKIAKKKNKNGRKHVEIDLNKVG) is disordered. A compositionally biased stretch (basic residues) spans 14–23 (IAKKKNKNGR). The span at 24 to 34 (KHVEIDLNKVG) shows a compositional bias: basic and acidic residues.

In terms of tissue distribution, expressed by the venom gland.

It localises to the secreted. This Hottentotta tamulus sindicus (Scorpion) protein is Non-cysteinic peptide Bs 10.